The sequence spans 678 residues: NADPH--cytochrome P450 reductase (678 aa).

Position 2 is an N-acetylglycine (G2). At G2–L22 the chain is on the lumenal side. Residues F23–I43 form a helical membrane-spanning segment. Residues F44 to S678 are Cytoplasmic-facing. Positions I80–W224 constitute a Flavodoxin-like domain. Residues S86–A91, A138–G141, L173–N182, and D208 contribute to the FMN site. Positions K279–P521 constitute an FAD-binding FR-type domain. R298 lines the NADP(+) pocket. FAD-binding positions include R424, R454–S457, C472–V474, Y478, and G488–T491. Residues T535, S596–R597, K602–Q606, and D639 contribute to the NADP(+) site. Position 677 (W677) interacts with FAD.

The protein belongs to the NADPH--cytochrome P450 reductase family. This sequence in the N-terminal section; belongs to the flavodoxin family. It in the C-terminal section; belongs to the flavoprotein pyridine nucleotide cytochrome reductase family. FAD is required as a cofactor. It depends on FMN as a cofactor.

The protein resides in the endoplasmic reticulum membrane. It carries out the reaction 2 oxidized [cytochrome P450] + NADPH = 2 reduced [cytochrome P450] + NADP(+) + H(+). Its function is as follows. This enzyme is required for electron transfer from NADP to cytochrome P450 in microsomes. It can also provide electron transfer to heme oxygenase and cytochrome B5. The polypeptide is NADPH--cytochrome P450 reductase (Mus musculus (Mouse)).